We begin with the raw amino-acid sequence, 155 residues long: Plastocyanin, chloroplastic (155 aa).

The transit peptide at 1-58 (MAALSSAAVSVPSFAAATPMRSSRSSRMVVRASLGKKAASAAVAMAAGAMLLGGSAMA) directs the protein to the chloroplast. In terms of domain architecture, Plastocyanin-like spans 59 to 155 (QDVLLGANGG…AGMVGKVTVN (97 aa)). The Cu cation site is built by His-95, Cys-140, His-143, and Met-148.

This sequence belongs to the plastocyanin family. The cofactor is Cu(2+).

Its subcellular location is the plastid. The protein localises to the chloroplast thylakoid membrane. Participates in electron transfer between P700 and the cytochrome b6-f complex in photosystem I. In Hordeum vulgare (Barley), this protein is Plastocyanin, chloroplastic (PETE).